The chain runs to 777 residues: Androgen receptor (777 aa).

Residues 1–416 (MEVHIGLGGV…IDYYFPPQKP (416 aa)) are modulating. Disordered regions lie at residues 53–95 (CVHP…QAPQ), 110–132 (GEQGGMPEEGNSESASKEGYPES), and 205–241 (RRAGQSTYSAGKAPEDGSSLPTEDKEQPCTDMALSEP). 2 NR C4-type zinc fingers span residues 417 to 434 (CLSCEDEASGCHYEALTC) and 453 to 472 (CASRNDCTIDKFRRKNCPSC). Residues 417–489 (CLSCEDEASG…AGMTLGARKL (73 aa)) constitute a DNA-binding region (nuclear receptor). Residues 526–757 (SCQPIFLNVL…DFPEMMSEII (232 aa)) form the NR LBD domain. Residues asparagine 563, arginine 610, and threonine 735 each contribute to the 17beta-hydroxy-5alpha-androstan-3-one site.

This sequence belongs to the nuclear hormone receptor family. NR3 subfamily. In terms of assembly, binds DNA as a homodimer. Interacts via the ligand-binding domain with LXXLL and FXXLF motifs from coactivator proteins. Interacts (via ligand-binding domain) with TRIM68. As to expression, detected in somatic Leydig and Sertoli cells in testis with high level expression. Also detected at lower expression levels in forebrain and heart.

It localises to the nucleus. The protein localises to the cytoplasm. Its function is as follows. Steroid hormone receptors are ligand-activated transcription factors that regulate eukaryotic gene expression and affect cellular proliferation and differentiation in target tissues. Transcription factor activity is modulated by bound coactivator and corepressor proteins. The chain is Androgen receptor (ar) from Aquarana catesbeiana (American bullfrog).